An 830-amino-acid polypeptide reads, in one-letter code: Post-transcriptional regulator MKT1 (830 aa).

Lys-4 participates in a covalent cross-link: Glycyl lysine isopeptide (Lys-Gly) (interchain with G-Cter in ubiquitin). The segment at 130 to 380 (RSRGWTQWNN…SPATTVTKNA (251 aa)) is interaction with PBP1. A disordered region spans residues 347-400 (DSEKNNKDGKKSNLSSPSSASSSASPATTVTKNASEKLTYEKSSTKEVRKPRDI). 3 positions are modified to phosphoserine: Ser-358, Ser-362, and Ser-371. The span at 361-373 (SSPSSASSSASPA) shows a compositional bias: low complexity. Basic and acidic residues predominate over residues 380–400 (ASEKLTYEKSSTKEVRKPRDI).

It belongs to the XPG/RAD2 endonuclease family. In terms of assembly, interacts (via C-terminus) with PBP1 (via C-terminus).

It localises to the cytoplasm. The protein localises to the cytosol. In terms of biological role, involved in 3'-UTR mediated RNA regulation. Binds to RNA-binding and RNA regulatory proteins. Complexes with PAB1-binding protein to promote mRNA interactions with poly(A)-binding protein. Promotes mating-type switching in mother cells by positively regulating HO expression. The polypeptide is Post-transcriptional regulator MKT1 (MKT1) (Saccharomyces cerevisiae (strain ATCC 204508 / S288c) (Baker's yeast)).